A 266-amino-acid polypeptide reads, in one-letter code: MQTDNTKSNTNKTAKQEWGSFAFVICIALLIRILIMEPFTVPTGSMKATILENDYIFSTKYSYGYSNYSLSFFDFIPLFKGRIFAREPERGDIVVFRPPNDMNVRYIKRLIGLPGDKIQLIDDVIYINDKKIERTEVGTYISEEGIKYLKFKETLPNGRTYFSYKLAPIFGVIYNDRYGNTDVFYVPEGKYFFLGDNRDQSNDSRVNLGFVPFENFIAKAQFIWLSTKITWWDNDIGVINLVLKLKPWIESVRLNRIFRNLYSTDE.

Residues 1–20 (MQTDNTKSNTNKTAKQEWGS) lie on the Cytoplasmic side of the membrane. The chain crosses the membrane as a helical span at residues 21–41 (FAFVICIALLIRILIMEPFTV). Residues 42-266 (PTGSMKATIL…IFRNLYSTDE (225 aa)) lie on the Periplasmic side of the membrane. Active-site residues include S45 and K108.

The protein belongs to the peptidase S26 family.

The protein localises to the cell inner membrane. It carries out the reaction Cleavage of hydrophobic, N-terminal signal or leader sequences from secreted and periplasmic proteins.. The sequence is that of Signal peptidase I (lepB) from Rickettsia felis (strain ATCC VR-1525 / URRWXCal2) (Rickettsia azadi).